The following is a 466-amino-acid chain: Soluble pyridine nucleotide transhydrogenase (466 aa).

An FAD-binding site is contributed by 36-45 (ERYHNVGGGC).

The protein belongs to the class-I pyridine nucleotide-disulfide oxidoreductase family. The cofactor is FAD.

Its subcellular location is the cytoplasm. It carries out the reaction NAD(+) + NADPH = NADH + NADP(+). Functionally, conversion of NADPH, generated by peripheral catabolic pathways, to NADH, which can enter the respiratory chain for energy generation. This Klebsiella pneumoniae subsp. pneumoniae (strain ATCC 700721 / MGH 78578) protein is Soluble pyridine nucleotide transhydrogenase.